Consider the following 309-residue polypeptide: Probable WRKY transcription factor 26 (309 aa).

Residues 1-24 form a disordered region; the sequence is MGSFDRQRAVPKFKTATPSPLPLS. A DNA-binding region (WRKY 1) is located at residues 111-176; the sequence is SSNKTSDDGY…YKGSHNHPKP (66 aa). Zn(2+) is bound by residues Cys-142, Cys-147, His-171, and His-173. The segment at 167–210 is disordered; the sequence is YKGSHNHPKPQSTKRSSSTAIAAHQNSSNGDGKDIGEDETEAKR. Residues 175-196 are compositionally biased toward polar residues; it reads KPQSTKRSSSTAIAAHQNSSNG. A compositionally biased stretch (basic and acidic residues) spans 197–210; the sequence is DGKDIGEDETEAKR. Residues 228–293 constitute a DNA-binding region (WRKY 2); the sequence is SDIDILDDGY…YEGKHKHQIP (66 aa). Zn(2+) is bound by residues Cys-259, Cys-264, His-288, and His-290.

This sequence belongs to the WRKY group I family. Interacts with VQ10.

Its subcellular location is the nucleus. Transcription factor. Interacts specifically with the W box (5'-(T)TGAC[CT]-3'), a frequently occurring elicitor-responsive cis-acting element. Functions with WRKY25 and WRKY33 as positive regulator of plant thermotolerance by partially participating in ethylene-response signal transduction pathway. In Arabidopsis thaliana (Mouse-ear cress), this protein is Probable WRKY transcription factor 26 (WRKY26).